A 244-amino-acid chain; its full sequence is MIRTDAKDGALVLFSGGQDSATCVAWALERYQTVETLGFDYGQRHRVELECREGVREALKHRFPAWSDRLGDDHMIDLSVLGAISDTAMTRTIEIETTANGLPNTFVPGRNLMFMTIAAAIAYRRGLRVLVGGMCETDFSGYPDCRDDTMKALQVALNLGMDTRMVLETPLMWLDKAQTWQLAEQLGGDALVELIRVETHTCYVGERAELHDWGFGCGECPACKLRKRGYEAYLKGERVTEAPL.

Residue Phe14–Val24 coordinates ATP. Residues Cys202, Cys217, Cys220, and Cys223 each coordinate Zn(2+).

It belongs to the QueC family. Requires Zn(2+) as cofactor.

The catalysed reaction is 7-carboxy-7-deazaguanine + NH4(+) + ATP = 7-cyano-7-deazaguanine + ADP + phosphate + H2O + H(+). The protein operates within purine metabolism; 7-cyano-7-deazaguanine biosynthesis. Its function is as follows. Catalyzes the ATP-dependent conversion of 7-carboxy-7-deazaguanine (CDG) to 7-cyano-7-deazaguanine (preQ(0)). The sequence is that of 7-cyano-7-deazaguanine synthase from Burkholderia cenocepacia (strain ATCC BAA-245 / DSM 16553 / LMG 16656 / NCTC 13227 / J2315 / CF5610) (Burkholderia cepacia (strain J2315)).